Consider the following 350-residue polypeptide: tRNA N6-adenosine threonylcarbamoyltransferase (350 aa).

Residues histidine 113 and histidine 117 each contribute to the Fe cation site. Substrate-binding positions include 135–139, aspartate 169, glycine 182, aspartate 186, and asparagine 282; that span reads LVSGG. Aspartate 310 lines the Fe cation pocket.

This sequence belongs to the KAE1 / TsaD family. Fe(2+) serves as cofactor.

It is found in the cytoplasm. The enzyme catalyses L-threonylcarbamoyladenylate + adenosine(37) in tRNA = N(6)-L-threonylcarbamoyladenosine(37) in tRNA + AMP + H(+). Required for the formation of a threonylcarbamoyl group on adenosine at position 37 (t(6)A37) in tRNAs that read codons beginning with adenine. Is involved in the transfer of the threonylcarbamoyl moiety of threonylcarbamoyl-AMP (TC-AMP) to the N6 group of A37, together with TsaE and TsaB. TsaD likely plays a direct catalytic role in this reaction. The polypeptide is tRNA N6-adenosine threonylcarbamoyltransferase (Corynebacterium diphtheriae (strain ATCC 700971 / NCTC 13129 / Biotype gravis)).